We begin with the raw amino-acid sequence, 370 residues long: Peptidyl-prolyl cis-trans isomerase D (370 aa).

Phosphoserine is present on Ser-5. The PPIase cyclophilin-type domain occupies 19–183 (FFDVDIGGER…KLCVIAECGE (165 aa)). Position 171 is an N6-acetyllysine (Lys-171). The interval 185 to 215 (KEGDDWGIFPKDGSGDSHPDFPEDADVDLKD) is chaperone activity. Phosphoserine is present on Ser-198. An interaction with HSP90AB1 region spans residues 214–370 (KDVDKILLIS…EKAAYAKMFA (157 aa)). TPR repeat units follow at residues 223-256 (SEDL…VEGS), 273-306 (LSCV…DPSN), and 307-340 (TKAL…APED).

It belongs to the cyclophilin-type PPIase family. PPIase D subfamily. As to quaternary structure, identified in ESR1 or NR3C1/GCR steroid receptor-chaperone complexes. Found in HSP90 chaperone complexes with kinase clients LCK or EIF2AK1. Two monomers associate with one HSP90 homodimer. Interacts with HSP90AA1. Interacts with HSP90AB1; PPID and FKBP4 compete for binding to HSP90AB1 and the interaction is mutually exclusive with the PPID:HSPA8 interaction. Interacts with HSPA8; PPID and STIP1 but not FKBP4 compete for binding to HSPA8 and the interaction is mutually exclusive with the PPID:HSP90AB1 interaction. Interacts with S100A1 and S100A2; the interactions dissociate the PPID:HSP90AA1 interaction. Interacts with S100A6. Interacts with MYB, ILF2, XRCC6, RACK1 and RPS3. Interacts with cytoplasmic dynein 1 intermediate chain (DYNC1I1 or DYNC1I2). In terms of processing, the N-terminus is blocked. As to expression, detected in heart, thymis and brain.

The protein localises to the cytoplasm. Its subcellular location is the nucleus. It localises to the nucleolus. It is found in the nucleoplasm. It catalyses the reaction [protein]-peptidylproline (omega=180) = [protein]-peptidylproline (omega=0). Its activity is regulated as follows. Less sensitive to inhibition by cyclosporin A than is CYP-18. PPIase that catalyzes the cis-trans isomerization of proline imidic peptide bonds in oligopeptides and may therefore assist protein folding. Proposed to act as a co-chaperone in HSP90 complexes such as in unligated steroid receptors heterocomplexes. Different co-chaperones seem to compete for association with HSP90 thus establishing distinct HSP90-co-chaperone-receptor complexes with the potential to exert tissue-specific receptor activity control. May have a preference for estrogen receptor complexes and is not found in glucocorticoid receptor complexes. May be involved in cytoplasmic dynein-dependent movement of the receptor from the cytoplasm to the nucleus. May regulate MYB by inhibiting its DNA-binding activity. Involved in regulation of AHR signaling by promoting the formation of the AHR:ARNT dimer; the function is independent of HSP90 but requires the chaperone activity. Involved in regulation of UV radiation-induced apoptosis. This chain is Peptidyl-prolyl cis-trans isomerase D, found in Bos taurus (Bovine).